The primary structure comprises 163 residues: Peptidyl-prolyl cis-trans isomerase FKBP15-2 (163 aa).

The signal sequence occupies residues 1–25 (MASKMSLRYSLFLIFFSLISLQGFA). Residues 52 to 140 (GDTIKVHYRG…IFDTELIAVN (89 aa)) form the PPIase FKBP-type domain. The segment at 142–163 (KPAGGEEYGGDEDDEGYGNDEL) is disordered. Over residues 149–163 (YGGDEDDEGYGNDEL) the composition is skewed to acidic residues. Residues 160–163 (NDEL) carry the Prevents secretion from ER motif.

Belongs to the FKBP-type PPIase family.

It is found in the endoplasmic reticulum lumen. It carries out the reaction [protein]-peptidylproline (omega=180) = [protein]-peptidylproline (omega=0). Its function is as follows. PPIases accelerate the folding of proteins. It catalyzes the cis-trans isomerization of proline imidic peptide bonds in oligopeptides. This is Peptidyl-prolyl cis-trans isomerase FKBP15-2 (FKBP15-2) from Arabidopsis thaliana (Mouse-ear cress).